The chain runs to 504 residues: MFS antiporter QDR2 (504 aa).

A compositionally biased stretch (polar residues) spans 1 to 14 (MLSTTQSVTEPTEV). The tract at residues 1 to 23 (MLSTTQSVTEPTEVTSKKVEDIE) is disordered. Over 1 to 41 (MLSTTQSVTEPTEVTSKKVEDIEKENDEETPYSIFTSYDRL) the chain is Cytoplasmic. Residues 42–62 (VLIVILSLIGFWSTISSPIYF) form a helical membrane-spanning segment. The Extracellular segment spans residues 63–75 (PALPTLTSYFHTS). The chain crosses the membrane as a helical span at residues 76 to 96 (SSIMNISVVAYLIFQGIAPTI). Residues 97-106 (SSNLADTFGR) are Cytoplasmic-facing. The chain crosses the membrane as a helical span at residues 107–129 (RPVILASIIVFCASCVAISQTNV). At 130 to 132 (YWL) the chain is on the extracellular side. The chain crosses the membrane as a helical span at residues 133-155 (LAVLRCIQAAGIAAVISISSGVA). Residues 156–169 (GDVCTRANRGSMVG) lie on the Cytoplasmic side of the membrane. The chain crosses the membrane as a helical span at residues 170 to 190 (AVAGLQLVGNGIGGLVGAALI). Over 191–198 (SSFNSWRS) the chain is Extracellular. Residues 199 to 219 (IFIFLTIGGGVTFILAIFILP) traverse the membrane as a helical segment. Topologically, residues 220–278 (ETSRKLVGNGSVVPKNILNKSPYIYLPHFKKRMNNDITTIVPATRFDLLGPLKIFFQKN) are cytoplasmic. Residues 279–299 (VFCTLLPVGIHFAAWTMVLTS) form a helical membrane-spanning segment. Residues 300–311 (LSTELESRYHYS) lie on the Extracellular side of the membrane. A helical membrane pass occupies residues 312–332 (VMHVGLIYLPQGIACIAGSLV). Topologically, residues 333 to 370 (VGKSLDWYYRYRKTIYDQEVECLPLDERPQFNIVATRL) are cytoplasmic. Residues 371-391 (TLSVVPALLMIIGLVIFGWCI) traverse the membrane as a helical segment. Residues 392–396 (QYKRH) lie on the Extracellular side of the membrane. Residues 397–417 (IISIIISTILVSFSASVFIAI) form a helical membrane-spanning segment. Residues 418–438 (CTTMLVDLYPNNGSGSTSCLN) lie on the Cytoplasmic side of the membrane. A helical transmembrane segment spans residues 439–456 (LMRCWLAALGAGVLDSMI). Topologically, residues 457-460 (NAMN) are extracellular. The chain crosses the membrane as a helical span at residues 461-483 (VGGTYTVVAGFCILFDLALIYVL). The Cytoplasmic portion of the chain corresponds to 484-504 (HNAKKKFSNSGPTTTKSPPKQ).

Belongs to the major facilitator superfamily. CAR1 family.

It is found in the cell membrane. Its function is as follows. MFS antiporter that does not display functional linkage as drug transporter and performs functions that significantly affect biofilm development and virulence. No substrate for transport has been identified yet, but plays an important role in the growth in the host. The sequence is that of MFS antiporter QDR2 (QDR2) from Candida albicans (strain SC5314 / ATCC MYA-2876) (Yeast).